The chain runs to 94 residues: Putative pterin-4-alpha-carbinolamine dehydratase (94 aa).

It belongs to the pterin-4-alpha-carbinolamine dehydratase family.

It catalyses the reaction (4aS,6R)-4a-hydroxy-L-erythro-5,6,7,8-tetrahydrobiopterin = (6R)-L-erythro-6,7-dihydrobiopterin + H2O. This chain is Putative pterin-4-alpha-carbinolamine dehydratase, found in Caulobacter vibrioides (strain ATCC 19089 / CIP 103742 / CB 15) (Caulobacter crescentus).